The primary structure comprises 119 residues: Large ribosomal subunit protein uL18 (119 aa).

This sequence belongs to the universal ribosomal protein uL18 family. In terms of assembly, part of the 50S ribosomal subunit; part of the 5S rRNA/L5/L18/L25 subcomplex. Contacts the 5S and 23S rRNAs.

Functionally, this is one of the proteins that bind and probably mediate the attachment of the 5S RNA into the large ribosomal subunit, where it forms part of the central protuberance. This is Large ribosomal subunit protein uL18 from Chlorobium phaeovibrioides (strain DSM 265 / 1930) (Prosthecochloris vibrioformis (strain DSM 265)).